The primary structure comprises 157 residues: Ribosome maturation factor RimP (157 aa).

Belongs to the RimP family.

The protein resides in the cytoplasm. In terms of biological role, required for maturation of 30S ribosomal subunits. This Synechococcus sp. (strain CC9311) protein is Ribosome maturation factor RimP.